We begin with the raw amino-acid sequence, 731 residues long: Actin filament-associated protein 1 (731 aa).

The residue at position 1 (M1) is an N-acetylmethionine. Residues V46–E90 form a disordered region. The segment covering P59–P84 has biased composition (pro residues). Residues P70–W73 carry the SH3-binding motif. The SH2-binding 1 signature appears at Y93 to A96. A disordered region spans residues G118–H138. The PH 1 domain maps to D152–S248. Residues G252–S318 are disordered. Basic and acidic residues predominate over residues A271 to S284. Phosphoserine occurs at positions 283 and 284. One can recognise a PH 2 domain in the interval D348–G442. The SH2-binding 2 motif lies at Y452–V457. Positions S511–N550 are disordered. S549 is subject to Phosphoserine. Positions K558 to A649 form a coiled coil. The segment at D595–T638 is interaction with F-actin. Positions A657 to T731 are disordered. Phosphoserine occurs at positions 665, 666, and 669. At T676 the chain carries Phosphothreonine. The segment covering E678–T687 has biased composition (polar residues). 2 positions are modified to phosphoserine: S680 and S688. Residues K721–T731 are compositionally biased toward basic and acidic residues.

As to quaternary structure, monomer and homomultimer. Interacts via its C-terminus with F-actin; probably involving AFAP1 multimers. Interacts with activated SRC SH3-SH2 domains. Interacts via its PH 1 domain with PRKCA, PRKCB and PRKCI. Post-translationally, phosphorylated on tyrosine residues. As to expression, widely expressed with highest levels in brain.

The protein resides in the cytoplasm. It is found in the cytoskeleton. It localises to the stress fiber. Its function is as follows. Can cross-link actin filaments into both network and bundle structures. May modulate changes in actin filament integrity and induce lamellipodia formation. May function as an adapter molecule that links other proteins, such as SRC and PKC to the actin cytoskeleton. The polypeptide is Actin filament-associated protein 1 (Afap1) (Rattus norvegicus (Rat)).